Here is a 205-residue protein sequence, read N- to C-terminus: dITP/XTP pyrophosphatase (205 aa).

7-12 serves as a coordination point for substrate; sequence SNNRGK. Mg(2+) contacts are provided by E39 and D68. The active-site Proton acceptor is D68. Substrate-binding positions include A69, 154 to 157, K177, and 182 to 183; these read FGFD and HR.

Belongs to the HAM1 NTPase family. Homodimer. The cofactor is Mg(2+).

The enzyme catalyses XTP + H2O = XMP + diphosphate + H(+). It carries out the reaction dITP + H2O = dIMP + diphosphate + H(+). It catalyses the reaction ITP + H2O = IMP + diphosphate + H(+). In terms of biological role, pyrophosphatase that catalyzes the hydrolysis of nucleoside triphosphates to their monophosphate derivatives, with a high preference for the non-canonical purine nucleotides XTP (xanthosine triphosphate), dITP (deoxyinosine triphosphate) and ITP. Seems to function as a house-cleaning enzyme that removes non-canonical purine nucleotides from the nucleotide pool, thus preventing their incorporation into DNA/RNA and avoiding chromosomal lesions. This Acidovorax ebreus (strain TPSY) (Diaphorobacter sp. (strain TPSY)) protein is dITP/XTP pyrophosphatase.